We begin with the raw amino-acid sequence, 330 residues long: MTATQPVHLVRPAPVHVHPSSERWSVEAIEALFALPFNDLIFRAQQVHREHFDANAVQRSTLLSIKTGGCPEDCAYCPQSVHHDTGVEADKLMDVATVRQAAQAAAAAGATRFCMGAAWREPKDRDIEKVVELVREVKSLGLEACCTLGMLSKPQAQALKEAGVDYYNHNLDTAPEAYGRIISTRVYEERLQTLAHVRDAGMNVCCGGIVGMGESRRERAGLVAQLANLDPHPESVPINELVQVEGTPLAGSDKLDPFEFVRTIAVARITMPTAYVRLSAGRQEMGDAIQALCFLAGANSIFYGDKLLTTGNPDVERDEALFERLGLTSA.

Positions 55–282 (NAVQRSTLLS…TAYVRLSAGR (228 aa)) constitute a Radical SAM core domain. [4Fe-4S] cluster-binding residues include C70, C74, and C77. [2Fe-2S] cluster is bound by residues C114, C145, C205, and R277.

The protein belongs to the radical SAM superfamily. Biotin synthase family. In terms of assembly, homodimer. [4Fe-4S] cluster serves as cofactor. [2Fe-2S] cluster is required as a cofactor.

It carries out the reaction (4R,5S)-dethiobiotin + (sulfur carrier)-SH + 2 reduced [2Fe-2S]-[ferredoxin] + 2 S-adenosyl-L-methionine = (sulfur carrier)-H + biotin + 2 5'-deoxyadenosine + 2 L-methionine + 2 oxidized [2Fe-2S]-[ferredoxin]. It functions in the pathway cofactor biosynthesis; biotin biosynthesis; biotin from 7,8-diaminononanoate: step 2/2. Catalyzes the conversion of dethiobiotin (DTB) to biotin by the insertion of a sulfur atom into dethiobiotin via a radical-based mechanism. This chain is Biotin synthase, found in Methylibium petroleiphilum (strain ATCC BAA-1232 / LMG 22953 / PM1).